We begin with the raw amino-acid sequence, 495 residues long: Probable aspartic-type endopeptidase OPSB (495 aa).

The signal sequence occupies residues 1–19 (MRGDSFIWSLATAIPLLST). Residues 73–408 (YFCNLTLGTP…DLDNNEISIA (336 aa)) enclose the Peptidase A1 domain. N-linked (GlcNAc...) asparagine glycosylation occurs at asparagine 76. Aspartate 91 is an active-site residue. A glycan (N-linked (GlcNAc...) asparagine) is linked at asparagine 136. Aspartate 290 is a catalytic residue. An N-linked (GlcNAc...) asparagine glycan is attached at asparagine 413. The tract at residues 447–470 (ATGLPGVETGVPGSRPPSSKAAGQ) is disordered. Alanine 467 is lipidated: GPI-anchor amidated alanine. The propeptide at 468–495 (AGQAKRPDFVLGVAAVGLAGAGMLFAAM) is removed in mature form.

The protein belongs to the peptidase A1 family.

Its subcellular location is the cell membrane. Probable GPI-anchored aspartic-type endopeptidase which contributes to virulence. The chain is Probable aspartic-type endopeptidase OPSB (OPSB) from Arthroderma benhamiae (strain ATCC MYA-4681 / CBS 112371) (Trichophyton mentagrophytes).